A 337-amino-acid polypeptide reads, in one-letter code: F420-dependent glucose-6-phosphate dehydrogenase 2 (337 aa).

Asp-40 provides a ligand contact to coenzyme F420-(gamma-Glu)n. The Proton donor role is filled by His-41. Residues Thr-77 and 108 to 109 (TG) contribute to the coenzyme F420-(gamma-Glu)n site. Residue Glu-110 is the Proton acceptor of the active site. Residues Asn-113, 178-179 (GG), and 181-182 (VV) contribute to the coenzyme F420-(gamma-Glu)n site. Substrate is bound by residues Thr-196, Lys-199, Lys-260, and Arg-284.

The protein belongs to the F420-dependent glucose-6-phosphate dehydrogenase family. In terms of assembly, homodimer.

It carries out the reaction oxidized coenzyme F420-(gamma-L-Glu)(n) + D-glucose 6-phosphate + H(+) = 6-phospho-D-glucono-1,5-lactone + reduced coenzyme F420-(gamma-L-Glu)(n). Functionally, catalyzes the coenzyme F420-dependent oxidation of glucose 6-phosphate (G6P) to 6-phosphogluconolactone. The polypeptide is F420-dependent glucose-6-phosphate dehydrogenase 2 (Rhodococcus jostii (strain RHA1)).